Here is a 427-residue protein sequence, read N- to C-terminus: Glutamate-1-semialdehyde 2,1-aminomutase (427 aa).

K267 is modified (N6-(pyridoxal phosphate)lysine).

This sequence belongs to the class-III pyridoxal-phosphate-dependent aminotransferase family. HemL subfamily. As to quaternary structure, homodimer. Requires pyridoxal 5'-phosphate as cofactor.

It is found in the cytoplasm. It carries out the reaction (S)-4-amino-5-oxopentanoate = 5-aminolevulinate. Its pathway is porphyrin-containing compound metabolism; protoporphyrin-IX biosynthesis; 5-aminolevulinate from L-glutamyl-tRNA(Glu): step 2/2. The chain is Glutamate-1-semialdehyde 2,1-aminomutase from Acetivibrio thermocellus (strain ATCC 27405 / DSM 1237 / JCM 9322 / NBRC 103400 / NCIMB 10682 / NRRL B-4536 / VPI 7372) (Clostridium thermocellum).